The sequence spans 107 residues: uncharacterized protein (107 aa).

This is an uncharacterized protein from Bacillus subtilis (strain 168).